The primary structure comprises 742 residues: MGETIADVYAESIDPEIYANNPAYSSLFTPYIHKQTIIADHVSVQCHIDLNGIDAVGSKFGNLNAHAGNFTSLCAPNCLPERLALVAYTVEYAFLHDDETDNAADQEALLLENKMLHQAINQSSMTSVSNRVSAKAQRKSEVQAKIAAEYLRLDPVFGEFFLKAWQTFTASVQDVRSLEFPSLDDYLEFRIVDAAADWTLYNFRWGSGITLTPEEEKIADPMSYVAYAELCLVNDLFSWDKEYDAHVKSNGEVPLVNAVHIVAVTQGLTHCAAKAVVQAEIRAHEERFCYLKEQYKATASPSDSILSWLKLLEHSMAGNWVWSLCVPRYFKVERNPYKDHLEKFGSEAVRVLTPEEHLRDSKQEINGTKEIELQEPKSNNTAESDVLAKYTSGYPTIDEPVLNPYTYINSLPSKNVRQTMIAALNSWYKVPVKSLLIIEGAVNFLHNSSLLLDDIQDGSVLRRGRPVAHQIFGVGQTINTATYLMNEALYLVQMLSPSAVLVYTDEMRNLQLGQGRDLHWSYHTHVPTPAQYISMVDGKTGGLFRLISRLMRSEATVNRDLDISQFATLLGRHFQIRDDYQNLQSDDYTKNKGFCDDLDEGKLSFPIILSMQSPGFSNTALSSVFKGSQKGETLSPEMKQYILEEITARGAFSQTKAVLRKLHIELLRLLMETEQKAGGIENWALRLLIMKLDLGDEKKKEAHKSDSAWKVNQRRAWKGSQKNGRPIDKACFLRAMEEASQK.

The interval 1–332 (MGETIADVYA…SLCVPRYFKV (332 aa)) is terpene cyclase. Aspartate 97 serves as a coordination point for Mg(2+). Substrate-binding positions include aspartate 97, 190-193 (RIVD), asparagine 234, 238-242 (SWDKE), and 328-329 (RY). The DDXXD 1 motif lies at 97–101 (DDETD). Residues 234–242 (NDLFSWDKE) carry the NSE/DTE motif. A prenyltransferase region spans residues 333–742 (ERNPYKDHLE…LRAMEEASQK (410 aa)). Isopentenyl diphosphate contacts are provided by lysine 414, arginine 417, and histidine 446. Positions 453 and 457 each coordinate Mg(2+). Positions 453-457 (DDIQD) match the DDXXD 2 motif. Arginine 462 lines the dimethylallyl diphosphate pocket. An isopentenyl diphosphate-binding site is contributed by arginine 463. Dimethylallyl diphosphate contacts are provided by lysine 539, threonine 540, glutamine 575, asparagine 582, lysine 592, and lysine 602. The interval 701 to 724 (EAHKSDSAWKVNQRRAWKGSQKNG) is disordered.

In the N-terminal section; belongs to the terpene synthase family. The protein in the C-terminal section; belongs to the FPP/GGPP synthase family. Hexamer. Mg(2+) serves as cofactor.

The enzyme catalyses isopentenyl diphosphate + (2E,6E)-farnesyl diphosphate = (2E,6E,10E)-geranylgeranyl diphosphate + diphosphate. It participates in secondary metabolite biosynthesis; terpenoid biosynthesis. Functionally, bifunctional terpene synthase; part of the gene cluster that mediates the biosynthesis of conidiogenone, a diterpene known to induce the conidiation. The bifunctional terpene synthase PrDS converts isopentenyl diphosphate (IPP) and dimethylallyl diphosphate (DMAPP) into deoxyconidiogenol. The C-terminal prenyltransferase (PT) domain of PrDS catalyzes formation of GGPP, whereas the N-terminal terpene cyclase (TC) domain catalyzes the cyclization of GGPP into deoxyconidiogenol. The cytochrome P450 monooxygenase PrP450 then catalyzes two rounds of oxidation to furnish conidiogenone. This Penicillium roqueforti (strain FM164) protein is Conidiogenone synthase.